A 505-amino-acid chain; its full sequence is Gap junction alpha-10 protein (505 aa).

The Cytoplasmic portion of the chain corresponds to 1–16 (MGDWNLLGGILEEVHS). A helical transmembrane segment spans residues 17-37 (HSTIVGKIWLTILFIFRMLVL). At 38 to 76 (GVAAEDVWDDEQSAFACNTQQPGCNNICYDDAFPISLIR) the chain is on the extracellular side. Residues 77 to 97 (FWVLQIIFVSSPSLVYMGHAL) traverse the membrane as a helical segment. Topologically, residues 98 to 165 (YRLRDFEKQR…TYVLHILTRS (68 aa)) are cytoplasmic. A helical membrane pass occupies residues 166-186 (VLEVGFMIGQYILYGFQMHPI). The Extracellular portion of the chain corresponds to 187-209 (YKCTQAPCPNSVDCFVSRPTEKT). The helical transmembrane segment at 210–230 (IFMLFMHSIAAISLLLNILEI) threads the bilayer. Topologically, residues 231–505 (FHLGIRKIMR…IIHETYVYVY (275 aa)) are cytoplasmic. A compositionally biased stretch (polar residues) spans 371–383 (TMTASQHRPSSAL). The segment at 371-491 (TMTASQHRPS…SKSSHVDSPP (121 aa)) is disordered. Positions 437-446 (MSEKGQRHSD) are enriched in basic and acidic residues. Low complexity predominate over residues 447-460 (SGSSRSLNSSCLDF).

Belongs to the connexin family. Alpha-type (group II) subfamily. In terms of assembly, a connexon is composed of a hexamer of connexins. In terms of tissue distribution, low levels were detected in skin, heart, kidney, testis, ovary, intestine. Expression not detected in brain, sciatic nerve or liver. According to PubMed:15147297 expression is detected only in horizontal cells in the inner nuclear layer of the retina and not in other neurons of the central nervous system or tissues. Detected in the outer plexiform layer of the retina (at protein level).

The protein localises to the cell membrane. Its subcellular location is the cell junction. The protein resides in the gap junction. Functionally, one gap junction consists of a cluster of closely packed pairs of transmembrane channels, the connexons, through which materials of low MW diffuse from one cell to a neighboring cell. Involved in tracer coupling between horizontal cells of the retina. May play a role in the regulation of horizontal cell patterning. The sequence is that of Gap junction alpha-10 protein (Gja10) from Mus musculus (Mouse).